The following is a 744-amino-acid chain: MITNKKIKISVPEKLGLSEESFEESWETVKYAIDHIYSDDMADLSFEQVYKTIYTIVLNKKGPILYNRLKDYLIQKLALLRETIVKDNTHDYEFLGTMARLWEVQCHCFKITGDLMMYMDKVYCKPNRCMEVYDMCLDLFRIEILQKCSSSLISALISDIERIRNLGSVDSEHTSLWKVLIGMMETLHDNRDSFFLTDFEPVLISATEEYYNKAIDIELLTPIESLEKIRKLRQFESMLDSSFLNVDSHNKLKTVLENVLIWGKLSDIIEDLTHEAMVISNGKLLQEIYDLSSEEKYRVTVIESIKSYINKNAINIPFNEGNRKKGQNAITWSSEIVELYRSQHSFLESIDFGSVRLNNLTGDVSNAILGDVFSMYFSKEGALPSEYLSTYVDHCMKRTKEKDAEIVKIKQDLLDSTKLIGLLTEKDIFEKIYKKQLSRRLLQQRSLVEIEKWMVQMIKKVLGTFFTSKLEIMLRDISLSSEMYQAFQHSTINSIEYLSFAPQVLTRTSWPFQSTNPIDEGISLPPRMSQILAGFEGYYSLKYKERVLKWAHHLSVIEIGCQFNSGYYEISFSVYAGVIFLLFEDYEELTLGEIYELTHIPIDDVKSLVMSMSTIPRCKILKKSSSSGNMKFSVNYFFSSPNRKVKVPVIACPLPSQKSDNLATASSVDTYDNEIVMELSAIIVRIMKTEGKLSHQQLLERTTKRTQSRLSLTPSILKRSIQLLIEKEYIQRNADDPSYYHYLS.

Residues 677-736 (MELSAIIVRIMKTEGKLSHQQLLERTTKRTQSRLSLTPSILKRSIQLLIEKEYIQRNADD) form the Cullin neddylation domain. Residue Lys-688 forms a Glycyl lysine isopeptide (Lys-Gly) (interchain with G-Cter in NEDD8) linkage.

Belongs to the cullin family. In terms of assembly, component of a ubiquitin-protein ligase complex consisting of the cullin CUL3, the linker protein ELC1, the substrate receptor ELA1, and the RING protein HRT1. Neddylated; enhancing the ubiquitin-ligase activity.

Its pathway is protein modification; protein ubiquitination. In terms of biological role, as part of the CRL3 E3 ubiquitin ligase complex; polyubiquitylates monoubiquitylated RNA polymerase II subunit RPO21 to trigger its proteolysis; plays a role in global genomic repair. The polypeptide is Cullin-3 (CUL3) (Saccharomyces cerevisiae (strain ATCC 204508 / S288c) (Baker's yeast)).